The following is an 882-amino-acid chain: DNA polymerase 1 (882 aa).

Residues 1–31 form a disordered region; sequence MTKQLTLFDIPSSKPAKSEQNTQQSQQSAPV. Positions 18-29 are enriched in polar residues; the sequence is SEQNTQQSQQSA.

Belongs to the DNA polymerase type-B family. As to quaternary structure, interacts with PCNA subunit PCNA2 and weakly with PCNA3.

The catalysed reaction is DNA(n) + a 2'-deoxyribonucleoside 5'-triphosphate = DNA(n+1) + diphosphate. DNA synthesis is stimulated by PCNA heterotrimers. This polymerase possesses two enzymatic activities: DNA synthesis (polymerase) and an exonucleolytic activity that degrades single-stranded DNA in the 3'- to 5'-direction. DNA polymerase I, DNA ligase and the flap endonuclease may be constitutively associated with the PCNA heterotrimer forming a scanning complex able to couple DNA synthesis and Okazaki fragment maturation. This is DNA polymerase 1 (dpo1) from Saccharolobus solfataricus (strain ATCC 35092 / DSM 1617 / JCM 11322 / P2) (Sulfolobus solfataricus).